The following is a 259-amino-acid chain: MFTLADISFRSRLLMGTGKFTTKEIMLQAITAAGSELVTLAMRRVDIKGGNDAILPTLRTAGVKLLPNTSGAKDADEALFVARLAREAIGTNWIKLEIHPDMQYLLPDPVETLKAASKLVKDGFVVLPYCSADPVLCRRLEEVGCAAVMPLGSPIGSNQGLKTKDFLQIIIEQTQVPVVVDAGIGAPSQALEALEMGADAVLVNTAIAVALDPVAMARAFSLALAAGDLAKSAGLAERRKYASATSPLTQFLSHYEVCK.

K95 functions as the Schiff-base intermediate with DXP in the catalytic mechanism. 1-deoxy-D-xylulose 5-phosphate-binding positions include G156, 182–183, and 204–205; these read AG and NT.

Belongs to the ThiG family. Homotetramer. Forms heterodimers with either ThiH or ThiS.

The protein localises to the cytoplasm. It catalyses the reaction [ThiS sulfur-carrier protein]-C-terminal-Gly-aminoethanethioate + 2-iminoacetate + 1-deoxy-D-xylulose 5-phosphate = [ThiS sulfur-carrier protein]-C-terminal Gly-Gly + 2-[(2R,5Z)-2-carboxy-4-methylthiazol-5(2H)-ylidene]ethyl phosphate + 2 H2O + H(+). It functions in the pathway cofactor biosynthesis; thiamine diphosphate biosynthesis. Its function is as follows. Catalyzes the rearrangement of 1-deoxy-D-xylulose 5-phosphate (DXP) to produce the thiazole phosphate moiety of thiamine. Sulfur is provided by the thiocarboxylate moiety of the carrier protein ThiS. In vitro, sulfur can be provided by H(2)S. This is Thiazole synthase from Baumannia cicadellinicola subsp. Homalodisca coagulata.